Consider the following 249-residue polypeptide: 5'-nucleotidase SurE (249 aa).

A divalent metal cation-binding residues include Asp-9, Asp-10, Ser-40, and Asn-92.

This sequence belongs to the SurE nucleotidase family. Requires a divalent metal cation as cofactor.

The protein localises to the cytoplasm. The enzyme catalyses a ribonucleoside 5'-phosphate + H2O = a ribonucleoside + phosphate. Functionally, nucleotidase that shows phosphatase activity on nucleoside 5'-monophosphates. In Shewanella baltica (strain OS223), this protein is 5'-nucleotidase SurE.